A 315-amino-acid chain; its full sequence is Phosphatidylglycerol--prolipoprotein diacylglyceryl transferase (315 aa).

The next 2 membrane-spanning stretches (helical) occupy residues 19-39 (FTIH…VWIL) and 93-113 (VWEG…VAFL). Arginine 141 is a binding site for a 1,2-diacyl-sn-glycero-3-phospho-(1'-sn-glycerol). Helical transmembrane passes span 188–208 (LFHP…ALII) and 256–276 (VWTA…LYQY).

This sequence belongs to the Lgt family.

The protein resides in the cell membrane. It carries out the reaction L-cysteinyl-[prolipoprotein] + a 1,2-diacyl-sn-glycero-3-phospho-(1'-sn-glycerol) = an S-1,2-diacyl-sn-glyceryl-L-cysteinyl-[prolipoprotein] + sn-glycerol 1-phosphate + H(+). It participates in protein modification; lipoprotein biosynthesis (diacylglyceryl transfer). Catalyzes the transfer of the diacylglyceryl group from phosphatidylglycerol to the sulfhydryl group of the N-terminal cysteine of a prolipoprotein, the first step in the formation of mature lipoproteins. The chain is Phosphatidylglycerol--prolipoprotein diacylglyceryl transferase from Bifidobacterium longum (strain DJO10A).